A 712-amino-acid polypeptide reads, in one-letter code: 3',5'-cyclic-AMP phosphodiesterase 4C (712 aa).

2 disordered regions span residues Met1–His31 and Arg45–Arg64. Over residues Ser17–His31 the composition is skewed to basic residues. The span at Ser48 to Arg64 shows a compositional bias: basic and acidic residues. Phosphoserine is present on Ser73. Positions Ala181–Asp200 are disordered. One can recognise a PDEase domain in the interval Val312–Ser641. His388 functions as the Proton donor in the catalytic mechanism. His388 lines the 3',5'-cyclic AMP pocket. AMP-binding residues include His388 and His392. Residues His392, His428, Asp429, and Asp546 each coordinate Zn(2+). AMP is bound by residues Asp429, Asp546, Gln597, and Phe600. Asp429 provides a ligand contact to Mg(2+). Asp429 lines the Mn(2+) pocket. Gln597 and Phe600 together coordinate 3',5'-cyclic AMP. 2 disordered regions span residues Ser636 to Arg655 and Glu664 to Thr712. The residue at position 641 (Ser641) is a Phosphoserine. The span at Glu664–Glu678 shows a compositional bias: acidic residues.

This sequence belongs to the cyclic nucleotide phosphodiesterase family. PDE4 subfamily. In terms of assembly, part of a complex containing AKAP5, ADCY5, ADCY6 and PKD2. Zn(2+) serves as cofactor. Mg(2+) is required as a cofactor. Requires Mn(2+) as cofactor. In terms of tissue distribution, expressed in various tissues but not in cells of the immune system.

It is found in the cell projection. Its subcellular location is the cilium. The enzyme catalyses 3',5'-cyclic AMP + H2O = AMP + H(+). Its pathway is purine metabolism; 3',5'-cyclic AMP degradation; AMP from 3',5'-cyclic AMP: step 1/1. With respect to regulation, inhibited by rolipram. Functionally, hydrolyzes the second messenger cAMP, which is a key regulator of many important physiological processes. In Homo sapiens (Human), this protein is 3',5'-cyclic-AMP phosphodiesterase 4C.